The following is a 745-amino-acid chain: uncharacterized protein (745 aa).

The HTH araC/xylS-type domain occupies 158-256; sequence NQVCDYIELH…HQTPKQYRGD (99 aa). DNA-binding regions (H-T-H motif) lie at residues 175–196 and 223–246; these read SELS…TESL and ITDI…KHFT.

This is an uncharacterized protein from Staphylococcus aureus (strain Mu50 / ATCC 700699).